The following is a 278-amino-acid chain: Phosphatidylglycerol--prolipoprotein diacylglyceryl transferase (278 aa).

Transmembrane regions (helical) follow at residues 13–33, 50–70, and 89–109; these read LFGI…ALAV, VFDF…LYYV, and NGGL…FFFT. An a 1,2-diacyl-sn-glycero-3-phospho-(1'-sn-glycerol)-binding site is contributed by Arg-135. A run of 3 helical transmembrane segments spans residues 175 to 195, 205 to 225, and 236 to 256; these read QPTF…LVLL, GEVF…IEGL, and IRVS…IVIV.

It belongs to the Lgt family.

It is found in the cell membrane. The catalysed reaction is L-cysteinyl-[prolipoprotein] + a 1,2-diacyl-sn-glycero-3-phospho-(1'-sn-glycerol) = an S-1,2-diacyl-sn-glyceryl-L-cysteinyl-[prolipoprotein] + sn-glycerol 1-phosphate + H(+). The protein operates within protein modification; lipoprotein biosynthesis (diacylglyceryl transfer). Functionally, catalyzes the transfer of the diacylglyceryl group from phosphatidylglycerol to the sulfhydryl group of the N-terminal cysteine of a prolipoprotein, the first step in the formation of mature lipoproteins. In Enterococcus faecalis (strain ATCC 700802 / V583), this protein is Phosphatidylglycerol--prolipoprotein diacylglyceryl transferase.